Here is a 477-residue protein sequence, read N- to C-terminus: GTPase Der (477 aa).

2 consecutive EngA-type G domains span residues 3–167 (LTIA…GKER) and 206–382 (LRIA…RMWN). GTP-binding positions include 9–16 (GRPNVGKS), 56–60 (DTAGL), 119–122 (NKSE), 212–219 (GRPNTGKS), 259–263 (DTAGL), and 324–327 (NKWD). The KH-like domain occupies 383–467 (RRISTAKLNR…PIRISLRASD (85 aa)).

The protein belongs to the TRAFAC class TrmE-Era-EngA-EngB-Septin-like GTPase superfamily. EngA (Der) GTPase family. In terms of assembly, associates with the 50S ribosomal subunit.

In terms of biological role, GTPase that plays an essential role in the late steps of ribosome biogenesis. This chain is GTPase Der, found in Bartonella quintana (strain Toulouse) (Rochalimaea quintana).